The following is a 662-amino-acid chain: Chaperone protein HtpG (662 aa).

The segment at 1 to 352 (MSKQTLSFQA…SADLPLNVSR (352 aa)) is a; substrate-binding. Residues 353–594 (ELLQESRDVR…GDGMSTQLAR (242 aa)) are b. Positions 382-402 (HDRHDSPAPQPAEGADRVSDV) are disordered. The segment at 595–662 (LLKQAGQQAP…YVKRVNALLV (68 aa)) is c.

The protein belongs to the heat shock protein 90 family. As to quaternary structure, homodimer.

The protein resides in the cytoplasm. In terms of biological role, molecular chaperone. Has ATPase activity. This Verminephrobacter eiseniae (strain EF01-2) protein is Chaperone protein HtpG.